Here is a 341-residue protein sequence, read N- to C-terminus: Phosphate acyltransferase (341 aa).

Belongs to the PlsX family. In terms of assembly, homodimer. Probably interacts with PlsY.

It is found in the cytoplasm. The enzyme catalyses a fatty acyl-[ACP] + phosphate = an acyl phosphate + holo-[ACP]. It functions in the pathway lipid metabolism; phospholipid metabolism. In terms of biological role, catalyzes the reversible formation of acyl-phosphate (acyl-PO(4)) from acyl-[acyl-carrier-protein] (acyl-ACP). This enzyme utilizes acyl-ACP as fatty acyl donor, but not acyl-CoA. The chain is Phosphate acyltransferase from Chlorobaculum parvum (strain DSM 263 / NCIMB 8327) (Chlorobium vibrioforme subsp. thiosulfatophilum).